The primary structure comprises 131 residues: Transcriptional activator protein (131 aa).

The Nuclear localization signal signature appears at 13-28 (KAQHRIAKKRAVRRRR). A zinc finger spans residues 33 to 52 (CGCSIYIHINCAKDGNGFTH). The tract at residues 78–131 (DVQXGGSTLHAHKDIPHTNPVQPQPEESTKSSQSVPELPSLDGIDSSFWDDIFE) is disordered. Residues 117-131 (SLDGIDSSFWDDIFE) form a transactivation region.

The protein belongs to the geminiviridae transcriptional activator protein family. As to quaternary structure, monomer. Homodimer. Homooligomer. Self-interaction correlates with nuclear localization and efficient activation of transcription. Monomers suppress local silencing by interacting with and inactivating host adenosine kinase 2 (ADK2) in the cytoplasm. Interacts with and inhibits host SNF1 kinase. Binds to ssDNA. Phosphorylated.

It localises to the host nucleus. The protein resides in the host cytoplasm. Strong activator of the late viral genes promoters. Enhances the expression of the capsid protein and nuclear shuttle protein. Acts as a suppressor of RNA-mediated gene silencing, also known as post-transcriptional gene silencing (PTGS), a mechanism of plant viral defense that limits the accumulation of viral RNAs. Suppresses the host RNA silencing by inhibiting adenosine kinase 2 (ADK2), a kinase involved in a general methylation pathway. Also suppresses the host basal defense by interacting with and inhibiting SNF1 kinase, a key regulator of cell metabolism implicated in innate antiviral defense. Determines pathogenicity. This Cucurbita moschata (Winter crookneck squash) protein is Transcriptional activator protein.